The following is a 315-amino-acid chain: Putative S-adenosyl-L-methionine-dependent methyltransferase MAV_4557 (315 aa).

S-adenosyl-L-methionine-binding positions include D134 and 163–164 (DL).

Belongs to the UPF0677 family.

Its function is as follows. Exhibits S-adenosyl-L-methionine-dependent methyltransferase activity. The protein is Putative S-adenosyl-L-methionine-dependent methyltransferase MAV_4557 of Mycobacterium avium (strain 104).